We begin with the raw amino-acid sequence, 639 residues long: Alpha-dioxygenase 1 (639 aa).

The active-site Proton acceptor is the His-163. Asp-164 contacts Ca(2+). His-168 is a heme b binding site. Ca(2+) contacts are provided by Thr-216, Trp-218, Asp-220, and Ser-222. Heme b contacts are provided by His-389, Arg-486, and Arg-490.

This sequence belongs to the peroxidase family. As to quaternary structure, forms monomers in solution. Heme b serves as cofactor. Requires Ca(2+) as cofactor. Expressed in roots (epiderm), mature flowers (e.g. anthers) and senescing leaves.

It is found in the lipid droplet. The enzyme catalyses a 1,2-saturated fatty acid + O2 = a (2R)-2-hydroperoxy fatty acid. It catalyses the reaction (9Z,12Z,15Z)-octadecatrienoate + O2 = (R)-2-hydroperoxy-(9Z,12Z,15Z)-octadecatrienoate. It carries out the reaction hexadecanoate + O2 = (2R)-2-hydroperoxyhexadecanoate. The catalysed reaction is (9Z,12Z)-octadecadienoate + O2 = (2R,9Z,12Z)-2-hydroperoxyoctadecadienoate. The enzyme catalyses (9Z)-octadecenoate + O2 = (2R,9Z)-2-hydroperoxyoctadecenoate. Functionally, alpha-dioxygenase that catalyzes the primary oxygenation step of a variety of 14-20 carbon fatty acids, containing up to three unsaturated bonds, into their corresponding 2R-hydroperoxides. Involved in the production of oxylipins that function in cell signaling, wound healing, and protection from infection. Mediates protection against oxidative stress and cell death, probably by generating some lipid-derived molecules. Promotes local and systemic plant defense in a salicylic acid (SA)-dependent manner, including the establishment of systemic acquired resistance (SAR) in response to incompatible interaction. Involved in a negative regulation of abscisic acid (ABA)-mediated signaling pathway. This chain is Alpha-dioxygenase 1, found in Arabidopsis thaliana (Mouse-ear cress).